The primary structure comprises 66 residues: Panusin (66 aa).

The N-terminal stretch at 1–22 (MKTKAVLMLMLLVLVAATLVQG) is a signal peptide. Positions 23 to 26 (EPEP) are excised as a propeptide. Cystine bridges form between C32–C54, C39–C61, and C44–C60. Y65 is modified (tyrosine amide).

As to quaternary structure, forms dimers and higher-order oligomers. In terms of processing, contains 3 disulfide bonds.

Functionally, antimicrobial peptide. Has antibacterial activity against Gram-positive bacteria S.aureus ATCC 29737 and B.subtilis ATCC 6633 as well as against Gram-negative bacteria E.coli ATCC 10536 and K.pneumoniae ATCC 10031. The polypeptide is Panusin (Panulirus argus (Caribbean spiny lobster)).